Reading from the N-terminus, the 305-residue chain is DNA-directed RNA polymerase 35 kDa subunit (305 aa).

Belongs to the poxviridae DNA-directed RNA polymerase 35 kDa subunit family. The DNA-dependent RNA polymerase used for intermediate and late genes expression consists of eight subunits 147 kDa, 133 kDa, 35 kDa, 30 kDa, 22 kDa, 19 kDa, 18 kDa and 7 kDa totalling more than 500 kDa in mass. The same holoenzyme, with the addition of the transcription-specificity factor RAP94, is used for early gene expression.

The protein localises to the virion. The enzyme catalyses RNA(n) + a ribonucleoside 5'-triphosphate = RNA(n+1) + diphosphate. Its function is as follows. Part of the DNA-dependent RNA polymerase which catalyzes the transcription of viral DNA into RNA using the four ribonucleoside triphosphates as substrates. Responsible for the transcription of early, intermediate and late genes. DNA-dependent RNA polymerase associates with the early transcription factor (ETF), itself composed of D6 and A7, thereby allowing the early genes transcription. Late transcription, and probably also intermediate transcription, require newly synthesized RNA polymerase. This is DNA-directed RNA polymerase 35 kDa subunit (RPO35) from Homo sapiens (Human).